The sequence spans 392 residues: MAIRLPLICLLGSFMVVAIAADLTPERYWSTALPNTPIPNSLHNLLTFDFTDEKSTNVQVGKGGVNVNTHKGKTGSGTAVNVGKGGVRVDTGKGKPGGGTHVSVGSGKGHGGGVAVHTGKPGKRTDVGVGKGGVTVHTRHKGRPIYVGVKPGANPFVYNYAAKETQLHDDPNAALFFLEKDLVRGKEMNVRFNAEDGYGGKTAFLPRGEAETVPFGSEKFSETLKRFSVEAGSEEAEMMKKTIEECEARKVSGEEKYCATSLESMVDFSVSKLGKYHVRAVSTEVAKKNAPMQKYKIAAAGVKKLSDDKSVVCHKQKYPFAVFYCHKAMMTTVYAVPLEGENGMRAKAVAVCHKNTSAWNPNHLAFKVLKVKPGTVPVCHFLPETHVVWFSY.

The signal sequence occupies residues 1–22 (MAIRLPLICLLGSFMVVAIAAD). TXV repeat units lie at residues 56 to 58 (TNV), 78 to 80 (TAV), 100 to 102 (THV), and 125 to 127 (TDV). Positions 57-164 (NVQVGKGGVN…PFVYNYAAKE (108 aa)) are 5 X approximate repeats. Positions 61 to 136 (GKGGVNVNTH…VGVGKGGVTV (76 aa)) are disordered. Positions 94-114 (GKPGGGTHVSVGSGKGHGGGV) are enriched in gly residues. Residues 176–392 (FFLEKDLVRG…PETHVVWFSY (217 aa)) enclose the BURP domain.

Expressed in seed. Highest expression in leaves and guard cells.

Its function is as follows. Acts to suppress chlorophyll degradation under moisture stress. This is BURP domain protein RD22 from Arabidopsis thaliana (Mouse-ear cress).